We begin with the raw amino-acid sequence, 429 residues long: D-amino acid dehydrogenase (429 aa).

3–17 (VVVLGSGVVGVTSAY) is an FAD binding site.

The protein belongs to the DadA oxidoreductase family. FAD serves as cofactor.

The enzyme catalyses a D-alpha-amino acid + A + H2O = a 2-oxocarboxylate + AH2 + NH4(+). It functions in the pathway amino-acid degradation; D-alanine degradation; NH(3) and pyruvate from D-alanine: step 1/1. Functionally, oxidative deamination of D-amino acids. This chain is D-amino acid dehydrogenase, found in Paraburkholderia xenovorans (strain LB400).